A 1295-amino-acid chain; its full sequence is MQALERDIDINRLEKISIGLASADEIREWSRGEVTKPETINYRTLRPEKDGLFDERIFGPTKDWECYCGKYKRIRFKGIICERCGVEVTRARVRRDRMGHIELAAPVAHVWFVKGVPSRMGYLLDISPKDLDRVLYFASSIVTWVDREGRANDIDRLRQQVEEEIRQIEQDRDEEITAAQALLTKRISVIKGESSPDELTEDYADVPEEEREEAIARARREAEETIEDIKRSMDEQIELIRRAWEEFQTLEPRQIVDDEELFREMKDRFGDEYGYGVYFRGGMGAEAIRDLIRQVDLEKEARELRQVVGESRGQKRQKAIKRLKVVDAFRTSGNKPEWMILDAIPVLPPDLRPMVQLDGGRFATSDLNDLYRRVINRNNRLKRLLDLGAPDVIVNNEKRMLQEAVDALFDNGRRGRAVTGAGNRPLKSLSDMLKGKQGRFRQNLLGKRVDYSGRSVIVVGPQLEMHQCGLPRLMAVELFKPFVMKVLVDRALAPNIRSAKQMVERLRPEVWDVLEDVIKEHPVLLNRAPTLHRLGIQAFEPVLVEGKAIQIHPLVCAAFNADFDGDQMAVHVPLSPEAQAEARILMLSTQNILKPADGFPVAVPSQDMVLGLYYITYAGEDFEEREPKALLASYAEADNAYREGSLRLHDKVILRREGERIETTLGRVLFNESIERTLRGYLGDAYNPAAYRFVNHELKKGEIKQLVQQYVERYPTELVSQLLDTLKHVGFHTATLAGISIGKNDIVVPEQKREILEKYEKLVEEVEEQWEAGFISDEERAERVIGLWTQAKNEVEEAMKANLWKLNPIYMMANSGARGSYSQITQLAGMRGLMTNAKGEIIDEPVKSNFMEGLTVLEYFTSTHGARKGQADTALRTADSGYLTRRLVDVAQDVVIREEDCGTDGYIELPLYLEDGQGDPNDSVAARYLARDLVNPETGEVVAEAGTDITRPLFEAWLEELPRETKVPVRTPTKCENPHGVCQKCYGRSLATNRPVDVGEAVGIIAAQSIGEPGTQLTMRTFHTGGVSGVEDITAGLPRVVELFEARHPKGEAVISDIDGIVSLEETDSERLVRVVVTAPDGSEAREYRVERQLLRPEIVDGAEIRANTPITEGSLYPHQILENDLRYGRGTTATERYLVDEVQKVYRAQGVDIHDKHIEIIVRQMLRKVLVEEPGDTRFLPEQVADRFSVLAENERVEEEGGRPAEFHTILMGITKASLATESFLSAASFQETARVLTDAAIEGKVDNLTGLKENVIIGKLIPAATGLPKYRRLTVTVEGYRADDVDELDIAAS.

Residues C66, C68, C81, and C84 each coordinate Zn(2+). 3 residues coordinate Mg(2+): D562, D564, and D566. Zn(2+) is bound by residues C901, C975, C982, and C985.

It belongs to the RNA polymerase beta' chain family. As to quaternary structure, the RNAP catalytic core consists of 2 alpha, 1 beta, 1 beta' and 1 omega subunit. When a sigma factor is associated with the core the holoenzyme is formed, which can initiate transcription. The cofactor is Mg(2+). Zn(2+) is required as a cofactor.

The catalysed reaction is RNA(n) + a ribonucleoside 5'-triphosphate = RNA(n+1) + diphosphate. In terms of biological role, DNA-dependent RNA polymerase catalyzes the transcription of DNA into RNA using the four ribonucleoside triphosphates as substrates. This chain is DNA-directed RNA polymerase subunit beta', found in Rubrobacter xylanophilus (strain DSM 9941 / JCM 11954 / NBRC 16129 / PRD-1).